A 333-amino-acid polypeptide reads, in one-letter code: Ornithine carbamoyltransferase (333 aa).

Carbamoyl phosphate is bound by residues 56–59 (STRT), Q83, R107, and 134–137 (HPTQ). L-ornithine contacts are provided by residues N167, D231, and 235–236 (SM). Residues 273–274 (CL) and R318 each bind carbamoyl phosphate.

This sequence belongs to the aspartate/ornithine carbamoyltransferase superfamily. OTCase family.

It is found in the cytoplasm. It carries out the reaction carbamoyl phosphate + L-ornithine = L-citrulline + phosphate + H(+). It functions in the pathway amino-acid biosynthesis; L-arginine biosynthesis; L-arginine from L-ornithine and carbamoyl phosphate: step 1/3. Its function is as follows. Has vitronectin and fibronectin-binding activity. In terms of biological role, reversibly catalyzes the transfer of the carbamoyl group from carbamoyl phosphate (CP) to the N(epsilon) atom of ornithine (ORN) to produce L-citrulline. The polypeptide is Ornithine carbamoyltransferase (argF) (Staphylococcus epidermidis (strain ATCC 12228 / FDA PCI 1200)).